The chain runs to 655 residues: p-hydroxybenzoic acid efflux pump subunit AaeB (655 aa).

The next 10 helical transmembrane spans lie at 13–33 (FAVK…HFQL), 38–58 (WAVL…GGEP), 69–89 (LRII…IAMI), 93–113 (LLMI…SSLV), 121–141 (WGLA…EPLL), 152–172 (EIVV…PRSI), 370–390 (LFWL…IAVV), 407–427 (FIYG…VIIP), 431–451 (QSML…GIEV), and 481–501 (LFLD…TVIL).

The protein belongs to the aromatic acid exporter ArAE (TC 2.A.85) family.

The protein resides in the cell inner membrane. Functionally, forms an efflux pump with AaeA. Could function as a metabolic relief valve, allowing to eliminate certain compounds when they accumulate to high levels in the cell. This chain is p-hydroxybenzoic acid efflux pump subunit AaeB, found in Escherichia fergusonii (strain ATCC 35469 / DSM 13698 / CCUG 18766 / IAM 14443 / JCM 21226 / LMG 7866 / NBRC 102419 / NCTC 12128 / CDC 0568-73).